The sequence spans 254 residues: MLKIAEHEFNSRLFTGTGKFSSANLMLEAIQASQSQLVTMAMKRLDLSSGSDEILLPLQQSGIKLLPNTSGARNAKEAVFAAELAREVLNTNWVKLEIHPDPKYLMPDPIETLAAAKTLCDKGFVVLPYVHADPVLCRRLEEVGCAAVMPLASPIGSNQGLATETFLKIIIEQASVPVVVDAGIGTPSQATHAMELGADAVLVNTAIASSRDPIAMARCFSQAVETGRAAYRAGLGQVSVRAEHTSPLTGFLNE.

Lys95 (schiff-base intermediate with DXP) is an active-site residue. Residues Gly156, 182 to 183 (AG), and 204 to 205 (NT) each bind 1-deoxy-D-xylulose 5-phosphate.

The protein belongs to the ThiG family. In terms of assembly, homotetramer. Forms heterodimers with either ThiH or ThiS.

The protein localises to the cytoplasm. The catalysed reaction is [ThiS sulfur-carrier protein]-C-terminal-Gly-aminoethanethioate + 2-iminoacetate + 1-deoxy-D-xylulose 5-phosphate = [ThiS sulfur-carrier protein]-C-terminal Gly-Gly + 2-[(2R,5Z)-2-carboxy-4-methylthiazol-5(2H)-ylidene]ethyl phosphate + 2 H2O + H(+). It participates in cofactor biosynthesis; thiamine diphosphate biosynthesis. In terms of biological role, catalyzes the rearrangement of 1-deoxy-D-xylulose 5-phosphate (DXP) to produce the thiazole phosphate moiety of thiamine. Sulfur is provided by the thiocarboxylate moiety of the carrier protein ThiS. In vitro, sulfur can be provided by H(2)S. This chain is Thiazole synthase, found in Shewanella sediminis (strain HAW-EB3).